The following is a 453-amino-acid chain: NADH-quinone oxidoreductase subunit D (453 aa).

The span at 1–21 shows a compositional bias: basic and acidic residues; sequence MKDTETRPGRHRAPEPAHPEQ. Positions 1–30 are disordered; that stretch reads MKDTETRPGRHRAPEPAHPEQPDTTGDTVV.

It belongs to the complex I 49 kDa subunit family. As to quaternary structure, NDH-1 is composed of 14 different subunits. Subunits NuoB, C, D, E, F, and G constitute the peripheral sector of the complex.

The protein localises to the cell membrane. It carries out the reaction a quinone + NADH + 5 H(+)(in) = a quinol + NAD(+) + 4 H(+)(out). Functionally, NDH-1 shuttles electrons from NADH, via FMN and iron-sulfur (Fe-S) centers, to quinones in the respiratory chain. The immediate electron acceptor for the enzyme in this species is believed to be a menaquinone. Couples the redox reaction to proton translocation (for every two electrons transferred, four hydrogen ions are translocated across the cytoplasmic membrane), and thus conserves the redox energy in a proton gradient. The chain is NADH-quinone oxidoreductase subunit D from Nocardia farcinica (strain IFM 10152).